A 709-amino-acid polypeptide reads, in one-letter code: Peptidoglycan D,D-transpeptidase FtsI homolog (709 aa).

The helical transmembrane segment at Leu-20–Ser-42 threads the bilayer. Residue Ser-341 is the Acyl-ester intermediate of the active site.

The protein belongs to the transpeptidase family.

It localises to the plastid. Its subcellular location is the chloroplast membrane. It catalyses the reaction Preferential cleavage: (Ac)2-L-Lys-D-Ala-|-D-Ala. Also transpeptidation of peptidyl-alanyl moieties that are N-acyl substituents of D-alanine.. The polypeptide is Peptidoglycan D,D-transpeptidase FtsI homolog (ftsI) (Nephroselmis olivacea (Green alga)).